Reading from the N-terminus, the 254-residue chain is Alcohol dehydrogenase 1 (254 aa).

Position 10-33 (10-33 (FVAGLGGIGLDTSREIVKSGPKNL)) interacts with NAD(+). Ser138 lines the substrate pocket. The Proton acceptor role is filled by Tyr151.

The protein belongs to the short-chain dehydrogenases/reductases (SDR) family. Homodimer.

The enzyme catalyses a primary alcohol + NAD(+) = an aldehyde + NADH + H(+). It carries out the reaction a secondary alcohol + NAD(+) = a ketone + NADH + H(+). This Drosophila hydei (Fruit fly) protein is Alcohol dehydrogenase 1 (Adh1).